We begin with the raw amino-acid sequence, 299 residues long: Elongation factor Ts (299 aa).

The tract at residues 81 to 84 (TDFV) is involved in Mg(2+) ion dislocation from EF-Tu.

The protein belongs to the EF-Ts family.

It localises to the cytoplasm. Functionally, associates with the EF-Tu.GDP complex and induces the exchange of GDP to GTP. It remains bound to the aminoacyl-tRNA.EF-Tu.GTP complex up to the GTP hydrolysis stage on the ribosome. In Halothermothrix orenii (strain H 168 / OCM 544 / DSM 9562), this protein is Elongation factor Ts.